The primary structure comprises 44 residues: Large ribosomal subunit protein bL34 (44 aa).

The interval 1 to 26 (MKMTFQPKKRQRAKVHGFRQRMKTAG) is disordered. The segment covering 7–22 (PKKRQRAKVHGFRQRM) has biased composition (basic residues).

This sequence belongs to the bacterial ribosomal protein bL34 family.

This Agathobacter rectalis (strain ATCC 33656 / DSM 3377 / JCM 17463 / KCTC 5835 / VPI 0990) (Eubacterium rectale) protein is Large ribosomal subunit protein bL34.